Consider the following 503-residue polypeptide: Glycosyltransferase family 92 protein ZK381.2 (503 aa).

A helical transmembrane segment spans residues 7–27 (YKPCLLIILIFNSVILLFILI). Residues 156 to 441 (KPVIICISPQ…FKCYFDSFYK (286 aa)) form the GT92 domain.

It belongs to the glycosyltransferase 92 family.

The protein localises to the membrane. This Caenorhabditis elegans protein is Glycosyltransferase family 92 protein ZK381.2.